The following is a 142-amino-acid chain: Small ribosomal subunit protein uS8c (142 aa).

The protein belongs to the universal ribosomal protein uS8 family. Part of the 30S ribosomal subunit.

It is found in the plastid. In terms of biological role, one of the primary rRNA binding proteins, it binds directly to 16S rRNA central domain where it helps coordinate assembly of the platform of the 30S subunit. The sequence is that of Small ribosomal subunit protein uS8c (rps8) from Euglena longa (Euglenophycean alga).